Reading from the N-terminus, the 224-residue chain is Thiamine-phosphate synthase (224 aa).

4-amino-2-methyl-5-(diphosphooxymethyl)pyrimidine-binding positions include 41–45 (QFRDK) and D77. Positions 78 and 97 each coordinate Mg(2+). Residue S116 participates in 4-amino-2-methyl-5-(diphosphooxymethyl)pyrimidine binding. 143-145 (TNS) provides a ligand contact to 2-[(2R,5Z)-2-carboxy-4-methylthiazol-5(2H)-ylidene]ethyl phosphate. K146 contacts 4-amino-2-methyl-5-(diphosphooxymethyl)pyrimidine. Residues G174 and 194 to 195 (IS) contribute to the 2-[(2R,5Z)-2-carboxy-4-methylthiazol-5(2H)-ylidene]ethyl phosphate site.

Belongs to the thiamine-phosphate synthase family. The cofactor is Mg(2+).

It carries out the reaction 2-[(2R,5Z)-2-carboxy-4-methylthiazol-5(2H)-ylidene]ethyl phosphate + 4-amino-2-methyl-5-(diphosphooxymethyl)pyrimidine + 2 H(+) = thiamine phosphate + CO2 + diphosphate. It catalyses the reaction 2-(2-carboxy-4-methylthiazol-5-yl)ethyl phosphate + 4-amino-2-methyl-5-(diphosphooxymethyl)pyrimidine + 2 H(+) = thiamine phosphate + CO2 + diphosphate. The catalysed reaction is 4-methyl-5-(2-phosphooxyethyl)-thiazole + 4-amino-2-methyl-5-(diphosphooxymethyl)pyrimidine + H(+) = thiamine phosphate + diphosphate. The protein operates within cofactor biosynthesis; thiamine diphosphate biosynthesis; thiamine phosphate from 4-amino-2-methyl-5-diphosphomethylpyrimidine and 4-methyl-5-(2-phosphoethyl)-thiazole: step 1/1. In terms of biological role, condenses 4-methyl-5-(beta-hydroxyethyl)thiazole monophosphate (THZ-P) and 2-methyl-4-amino-5-hydroxymethyl pyrimidine pyrophosphate (HMP-PP) to form thiamine monophosphate (TMP). The sequence is that of Thiamine-phosphate synthase from Latilactobacillus sakei subsp. sakei (strain 23K) (Lactobacillus sakei subsp. sakei).